Consider the following 1004-residue polypeptide: MGELCRRDSALTALDEETLWEMMESHRHRIVRCICPSRLTPYLRQAKVLCQLDEEEVLHSPRLTNSAMRAGHLLDLLKTRGKNGAIAFLESLKFHNPDVYTLVTGLQPDVDFSNFSGLMETSKLTECLAGAIGSLQEELNQEKGQKEVLLRRCQQLQEHLGLAETRAEGLHQLEADHSRMKREVSAHFHEVLRLKDEMLSLSLHYSNALQEKELAASRCRSLQEELYLLKQELQRANMVSSCELELQEQSLRTASDQESGDEELNRLKEENEKLRSLTFSLAEKDILEQSLDEARGSRQELVERIHSLRERAVAAERQREQYWEEKEQTLLQFQKSKMACQLYREKVNALQAQVCELQKERDQAYSARDSAQREISQSLVEKDSLRRQVFELTDQVCELRTQLRQLQAEPPGVLKQEARTREPCPREKQRLVRMHAICPRDDSDCSLVSSTESQLLSDLSATSSRELVDSFRSSSPAPPSQQSLYKRVAEDFGEEPWSFSSCLEIPEGDPGALPGAKAGDPHLDYELLDTADLPQLESSLQPVSPGRLDVSESGVLMRRRPARRILSQVTMLAFQGDALLEQISVIGGNLTGIFIHRVTPGSAADQMALRPGTQIVMVDYEASEPLFKAVLEDTTLEEAVGLLRRVDGFCCLSVKVNTDGYKRLLQDLEAKVATSGDSFYIRVNLAMEGRAKGELQVHCNEVLHVTDTMFQGCGCWHAHRVNSYTMKDTAAHGTIPNYSRAQQQLIALIQDMTQQCTVTRKPSSGGPQKLVRIVSMDKAKASPLRLSFDRGQLDPSRMEGSSTCFWAESCLTLVPYTLVRPHRPARPRPVLLVPRAVGKILSEKLCLLQGFKKCLAEYLSQEEYEAWSQRGDIIQEGEVSGGRCWVTRHAVESLMEKNTHALLDVQLDSVCTLHRMDIFPIVIHVSVNEKMAKKLKKGLQRLGTSEEQLLEAARQEEGDLDRAPCLYSSLAPDGWSDLDGLLSCVRQAIADEQKKVVWTEQSPR.

In terms of domain architecture, CARD spans 15–107 (DEETLWEMME…DVYTLVTGLQ (93 aa)). A coiled-coil region spans residues 128–409 (LAGAIGSLQE…RTQLRQLQAE (282 aa)). The maintains the protein in an inactive state stretch occupies residues 409-568 (EPPGVLKQEA…RRPARRILSQ (160 aa)). A Phosphoserine modification is found at Ser-544. A PDZ domain is found at 568 to 658 (QVTMLAFQGD…FCCLSVKVNT (91 aa)). One can recognise a Guanylate kinase-like domain in the interval 807-990 (AESCLTLVPY…LLSCVRQAIA (184 aa)).

Interacts (via CARD domain) with BCL10 (via CARD domain). Forms a complex with MALT1 and BCL10; resulting in the formation of a CBM (CARD14-BLC10-MALT1) complex. Interacts with TRAF2, TRAF3 and TRAF6. Isoform 1 is detected in placenta and epidermal keratinocytes. Isoform 2 is detected in leukocytes and fetal brain.

The protein localises to the cytoplasm. Acts as a scaffolding protein that can activate the inflammatory transcription factor NF-kappa-B and p38/JNK MAP kinase signaling pathways. Forms a signaling complex with BCL10 and MALT1, and activates MALT1 proteolytic activity and inflammatory gene expression. MALT1 is indispensable for CARD14-induced activation of NF-kappa-B and p38/JNK MAP kinases. May play a role in signaling mediated by TRAF2, TRAF3 and TRAF6 and protects cells against apoptosis. Functionally, not able to activate the inflammatory transcription factor NF-kappa-B and may function as a dominant negative regulator. The chain is Caspase recruitment domain-containing protein 14 (CARD14) from Homo sapiens (Human).